The sequence spans 187 residues: Signal peptidase complex catalytic subunit SEC11 (187 aa).

The Cytoplasmic portion of the chain corresponds to 1–18 (MLSSLSPYMANPRNTLSQ). The helical; Signal-anchor for type II membrane protein transmembrane segment at 19–39 (VLNFGLVLSSAFMVWKALSVI) threads the bilayer. The Lumenal segment spans residues 40-187 (TNSASPVVVV…MGLMVMLQRE (148 aa)). Catalysis depends on charge relay system residues Ser53 and His92. An N-linked (GlcNAc...) asparagine glycan is attached at Asn125. Asp129 (charge relay system) is an active-site residue. Residues 173–184 (VLLGFMGLMVML) form a C-terminal short (CTS) helix region.

This sequence belongs to the peptidase S26B family. In terms of assembly, component of the signal peptidase complex (SPC) composed of a catalytic subunit SEC11 and three accessory subunits SPC1, SPC2 and SPC3. The complex induces a local thinning of the ER membrane which is used to measure the length of the signal peptide (SP) h-region of protein substrates. This ensures the selectivity of the complex towards h-regions shorter than 18-20 amino acids. SPC associates with the translocon complex.

It is found in the endoplasmic reticulum membrane. It carries out the reaction Cleavage of hydrophobic, N-terminal signal or leader sequences from secreted and periplasmic proteins.. In terms of biological role, catalytic component of the signal peptidase complex (SPC) which catalyzes the cleavage of N-terminal signal sequences from nascent proteins as they are translocated into the lumen of the endoplasmic reticulum. Specifically cleaves N-terminal signal peptides that contain a hydrophobic alpha-helix (h-region) shorter than 18-20 amino acids. The polypeptide is Signal peptidase complex catalytic subunit SEC11 (SEC11) (Ajellomyces capsulatus (strain G186AR / H82 / ATCC MYA-2454 / RMSCC 2432) (Darling's disease fungus)).